A 234-amino-acid polypeptide reads, in one-letter code: uncharacterized protein (234 aa).

Val-10–Val-34 is an NADP(+) binding site. Ser-143 is a substrate binding site. Tyr-156 (proton acceptor) is an active-site residue.

It belongs to the short-chain dehydrogenases/reductases (SDR) family.

This is an uncharacterized protein from Staphylococcus saprophyticus subsp. saprophyticus (strain ATCC 15305 / DSM 20229 / NCIMB 8711 / NCTC 7292 / S-41).